Consider the following 635-residue polypeptide: MGRLLDSIDSPLDLKRLPVDDLPRLCEEIREEIIQTCAKNGGHLGSSLGAVELNVALHYVYSSPTDKLVWDVGHQAYAHKLLTGRRERFRTIRTEGGLAGFPERHESEHDAFGVGHASTAISAALGMLEAKRLSGAPGKVVALVGDGAMTGGVAFEGLNQAGYLGRDLVVVLNDNEMSISPNVGALSEWFSKKFASRTYNRWRRAVKDFLSHVPKGPEAIDMIRHGINATKALVTPGILFEGLGFHYVGPVDGHDVRSLVETLQKLVIFDGPVLLHAITTKGKGYQPAESDKATRGHGLSFFDVATGKPVKKAAAKAYTDLFAEALCEEMERDPRVVAITAAMLEGTGLIKAKQRFPERTYDVGIAEQHAVTFAAGLACEGVRPVVAIYSTFLQRAYDEIIHDVALQRLPVTFALDRGGLVGADGKTHQGAFDVAYLRCVPNLVVMAPSDENELRHMLHTALHHDGPAAFRFPRGAGEGVALEAPQVLPIGKGRLARAVPGKPDVCVVALGTTLHAALAAAEALAKDGVAASVVDARFAKPLDEELIAGEAERARCVVTIEEGCLPGGFGAACLELFERRGLVAEGLRVKRLGLPDEFVTHGDQGRQRAQLGLDADGIARACRAIVGERAKRGAA.

Thiamine diphosphate contacts are provided by residues His-74 and 115–117 (GHA). Residue Asp-146 coordinates Mg(2+). Residues 147-148 (GA), Asn-175, Tyr-285, and Glu-367 each bind thiamine diphosphate. Asn-175 is a binding site for Mg(2+).

The protein belongs to the transketolase family. DXPS subfamily. In terms of assembly, homodimer. Requires Mg(2+) as cofactor. The cofactor is thiamine diphosphate.

It catalyses the reaction D-glyceraldehyde 3-phosphate + pyruvate + H(+) = 1-deoxy-D-xylulose 5-phosphate + CO2. It participates in metabolic intermediate biosynthesis; 1-deoxy-D-xylulose 5-phosphate biosynthesis; 1-deoxy-D-xylulose 5-phosphate from D-glyceraldehyde 3-phosphate and pyruvate: step 1/1. Functionally, catalyzes the acyloin condensation reaction between C atoms 2 and 3 of pyruvate and glyceraldehyde 3-phosphate to yield 1-deoxy-D-xylulose-5-phosphate (DXP). In Anaeromyxobacter sp. (strain Fw109-5), this protein is 1-deoxy-D-xylulose-5-phosphate synthase.